The sequence spans 121 residues: D-ornithine 4,5-aminomutase subunit alpha (121 aa).

As to quaternary structure, heterotetramer of 2 alpha (OraS) and 2 beta (OraE) subunits.

It catalyses the reaction D-ornithine = (2R,4S)-2,4-diaminopentanoate. Its activity is regulated as follows. Increased activity in the presence of dithiothreitol (DTT) in vitro. Inhibited by 1 mM potassium phosphate and potassium chloride. Inhibited by L-alpha-ornithine, D,L-alpha-lysine, L-beta-lysine (50%-60%), L-alpha-lysine (26%) and by delta-amino-n-valeric acid to a lesser extent. Significant decrease in activity is observed in the presence of 0.2 mM p-chloromercuribenzoate, N-ethylmaleimide and also by 2 mM iodoacetate to a lesser extent but not inhibited by arsenite. In terms of biological role, component of a complex that catalyzes the reversible migration of the omega amino group of D-ornithine to C-4 to form (2R,4S)-2,4-diaminopentanoic acid. The role of OraS remains obscure; however, it seems to be required for a correct folding of the OraE subunit. The complex is active only on D-ornithine and 2,4-diaminopentanoic acid and not active on L-ornithine, L-beta-lysine, L-alpha-lysine or D-alpha-lysine. This Acetoanaerobium sticklandii (strain ATCC 12662 / DSM 519 / JCM 1433 / CCUG 9281 / NCIMB 10654 / HF) (Clostridium sticklandii) protein is D-ornithine 4,5-aminomutase subunit alpha (oraS).